A 432-amino-acid polypeptide reads, in one-letter code: Enolase (432 aa).

Q167 is a (2R)-2-phosphoglycerate binding site. E209 functions as the Proton donor in the catalytic mechanism. Residues D246, E289, and D316 each contribute to the Mg(2+) site. Residues K341, R370, S371, and K392 each contribute to the (2R)-2-phosphoglycerate site. Residue K341 is the Proton acceptor of the active site.

This sequence belongs to the enolase family. Mg(2+) is required as a cofactor.

The protein localises to the cytoplasm. It localises to the secreted. It is found in the cell surface. It catalyses the reaction (2R)-2-phosphoglycerate = phosphoenolpyruvate + H2O. It participates in carbohydrate degradation; glycolysis; pyruvate from D-glyceraldehyde 3-phosphate: step 4/5. Its function is as follows. Catalyzes the reversible conversion of 2-phosphoglycerate (2-PG) into phosphoenolpyruvate (PEP). It is essential for the degradation of carbohydrates via glycolysis. This chain is Enolase, found in Petrotoga mobilis (strain DSM 10674 / SJ95).